The chain runs to 466 residues: Soluble pyridine nucleotide transhydrogenase (466 aa).

36–45 (ERYHNVGGGC) is a binding site for FAD.

It belongs to the class-I pyridine nucleotide-disulfide oxidoreductase family. The cofactor is FAD.

It is found in the cytoplasm. It carries out the reaction NAD(+) + NADPH = NADH + NADP(+). Conversion of NADPH, generated by peripheral catabolic pathways, to NADH, which can enter the respiratory chain for energy generation. This chain is Soluble pyridine nucleotide transhydrogenase, found in Salmonella paratyphi C (strain RKS4594).